Consider the following 143-residue polypeptide: WW domain-containing protein C660.05 (143 aa).

One can recognise a WW domain in the interval 9–44 (GLPAGWVAQWDPTYQAYFYINETFEGAQPQWEPPIP). Positions 115–143 (HHGPLHGPHGGFGGRGGGRMGGRGGRGRR) are disordered.

The sequence is that of WW domain-containing protein C660.05 from Schizosaccharomyces pombe (strain 972 / ATCC 24843) (Fission yeast).